Reading from the N-terminus, the 369-residue chain is Mitogen-activated protein kinase 11 (369 aa).

The 287-residue stretch at 40-326 (VPPLRPIGRG…VDEALCHPYL (287 aa)) folds into the Protein kinase domain. Residues 46–54 (IGRGASGIV) and K69 each bind ATP. D166 (proton acceptor) is an active-site residue. T198 is modified (phosphothreonine). The TXY motif lies at 198 to 200 (TEY). The residue at position 200 (Y200) is a Phosphotyrosine. The residue at position 203 (T203) is a Phosphothreonine.

It belongs to the protein kinase superfamily. CMGC Ser/Thr protein kinase family. MAP kinase subfamily. As to quaternary structure, interacts with MKK1, MKK2 and MKK6. Post-translationally, dually phosphorylated on Thr-198 and Tyr-200, which activates the enzyme.

The catalysed reaction is L-seryl-[protein] + ATP = O-phospho-L-seryl-[protein] + ADP + H(+). It catalyses the reaction L-threonyl-[protein] + ATP = O-phospho-L-threonyl-[protein] + ADP + H(+). Its activity is regulated as follows. Activated by threonine and tyrosine phosphorylation. The chain is Mitogen-activated protein kinase 11 (MPK11) from Arabidopsis thaliana (Mouse-ear cress).